We begin with the raw amino-acid sequence, 109 residues long: Guanylin (109 aa).

Positions 1-21 (MNTFLFPTLCLLGVWAALAGG) are cleaved as a signal peptide. Positions 22–94 (VTVKDGEFSF…LERLETIAQD (73 aa)) are excised as a propeptide. Intrachain disulfides connect C63–C76, C98–C106, and C101–C109.

Belongs to the guanylin family.

It localises to the secreted. Endogenous activator of intestinal guanylate cyclase. It stimulates this enzyme through the same receptor binding region as the heat-stable enterotoxins. This is Guanylin (GUCA2A) from Sus scrofa (Pig).